Here is a 317-residue protein sequence, read N- to C-terminus: Melanocyte-stimulating hormone receptor (317 aa).

Positions 1-26 (MPVQGSPRSLLGAVNSTPTATPHLRP) are disordered. The Extracellular segment spans residues 1-37 (MPVQGSPRSLLGAVNSTPTATPHLRPAANQTGPQCLE). Asparagine 29 carries an N-linked (GlcNAc...) asparagine glycan. The helical transmembrane segment at 38 to 63 (VSIPDGLFLCLGLVSLVENTLVVAAI) threads the bilayer. Topologically, residues 64 to 72 (AKNRNLHSP) are cytoplasmic. A helical membrane pass occupies residues 73-93 (MYCFVCCLALSDLLVSVSSVL). Over 94-118 (ETAVLLLLGAGALAAQATVVQLLGN) the chain is Extracellular. Residues 119–140 (VIDVLLCSSMVSSLFFLGAIAM) traverse the membrane as a helical segment. Topologically, residues 141-163 (DRYISIFYALRYHSIVTLARARR) are cytoplasmic. The chain crosses the membrane as a helical span at residues 164 to 183 (AIAAIWAASMLSSTLFIAYC). Residues 184–191 (DHTAALLC) are Extracellular-facing. The helical transmembrane segment at 192 to 211 (LVVFFLAMLVLMAVLYVHML) threads the bilayer. Topologically, residues 212–240 (TQACQHAQGIARLHKRQRPVQQGWGLKGA) are cytoplasmic. Residues 241-266 (ATLAILLGVFFLCWGPFFLHLTLIAV) traverse the membrane as a helical segment. At 267–279 (CPQHPTCSCIFKN) the chain is on the extracellular side. Residues 280–300 (FRLFLALIVCNAIVDPLIYAF) traverse the membrane as a helical segment. Topologically, residues 301–317 (RSQELCKTLKELLLFSW) are cytoplasmic.

Belongs to the G-protein coupled receptor 1 family. In terms of assembly, interacts with MGRN1, but does not undergo MGRN1-mediated ubiquitination; this interaction competes with GNAS-binding and thus inhibits agonist-induced cAMP production. Interacts with OPN3; the interaction results in a decrease in MC1R-mediated cAMP signaling and ultimately a decrease in melanin production in melanocytes.

The protein resides in the cell membrane. Receptor for MSH (alpha, beta and gamma) and ACTH. The activity of this receptor is mediated by G proteins which activate adenylate cyclase. Mediates melanogenesis, the production of eumelanin (black/brown) and phaeomelanin (red/yellow), via regulation of cAMP signaling in melanocytes. The sequence is that of Melanocyte-stimulating hormone receptor (MC1R) from Hapalemur griseus (Gray gentle lemur).